The sequence spans 299 residues: Muscleblind-like protein (299 aa).

2 consecutive C3H1-type zinc fingers follow at residues 38-66 and 72-100; these read WLQV…HPPP and QGRV…HPPQ.

Belongs to the muscleblind family.

Its subcellular location is the nucleus. Binds to RNA with repeat sequences CUG and CCUG. This Caenorhabditis briggsae protein is Muscleblind-like protein.